Consider the following 449-residue polypeptide: Tryptophan--tRNA ligase (449 aa).

Residues 10 to 12 (TTT) and 18 to 19 (GN) contribute to the ATP site. The 'HIGH' region motif lies at 11 to 19 (TTGTPHLGN). An L-tryptophan-binding site is contributed by D143. ATP contacts are provided by residues 155-157 (GRD), L197, and 204-208 (KMSKS). The short motif at 204–208 (KMSKS) is the 'KMSKS' region element.

This sequence belongs to the class-I aminoacyl-tRNA synthetase family. In terms of assembly, homodimer.

The protein localises to the cytoplasm. It carries out the reaction tRNA(Trp) + L-tryptophan + ATP = L-tryptophyl-tRNA(Trp) + AMP + diphosphate + H(+). Functionally, catalyzes the attachment of tryptophan to tRNA(Trp). The polypeptide is Tryptophan--tRNA ligase (Pseudomonas putida (strain ATCC 47054 / DSM 6125 / CFBP 8728 / NCIMB 11950 / KT2440)).